The sequence spans 493 residues: 3-octaprenyl-4-hydroxybenzoate carboxy-lyase (493 aa).

Asn172 contacts Mn(2+). Residues Ile175–Arg177, Arg189–Leu191, and Arg194–Gly195 each bind prenylated FMN. Residue Glu238 participates in Mn(2+) binding. Asp287 (proton donor) is an active-site residue.

Belongs to the UbiD family. Homohexamer. Prenylated FMN is required as a cofactor. The cofactor is Mn(2+).

The protein resides in the cell membrane. It catalyses the reaction a 4-hydroxy-3-(all-trans-polyprenyl)benzoate + H(+) = a 2-(all-trans-polyprenyl)phenol + CO2. It participates in cofactor biosynthesis; ubiquinone biosynthesis. Catalyzes the decarboxylation of 3-octaprenyl-4-hydroxy benzoate to 2-octaprenylphenol, an intermediate step in ubiquinone biosynthesis. This is 3-octaprenyl-4-hydroxybenzoate carboxy-lyase from Shewanella pealeana (strain ATCC 700345 / ANG-SQ1).